A 448-amino-acid polypeptide reads, in one-letter code: Fibulin-5 (448 aa).

The signal sequence occupies residues 1–23; the sequence is MPGLKRILTVTILALWLPHPGNA. The EGF-like 1; calcium-binding domain maps to 42 to 82; sequence DIDECRTIPEACRGDMMCVNQNGGYLCIPRTNPVYRGPYSN. 17 cysteine pairs are disulfide-bonded: cysteine 46–cysteine 59, cysteine 53–cysteine 68, cysteine 131–cysteine 144, cysteine 138–cysteine 153, cysteine 155–cysteine 166, cysteine 172–cysteine 181, cysteine 177–cysteine 190, cysteine 192–cysteine 205, cysteine 211–cysteine 221, cysteine 217–cysteine 230, cysteine 232–cysteine 245, cysteine 251–cysteine 262, cysteine 258–cysteine 271, cysteine 273–cysteine 286, cysteine 292–cysteine 305, cysteine 299–cysteine 314, and cysteine 320–cysteine 332. The Cell attachment site signature appears at 54-56; it reads RGD. An EGF-like 2; calcium-binding domain is found at 127 to 167; that stretch reads DVDECATDSHQCNPTQICINTEGGYTCSCTDGYWLLEGQCL. Positions 168 to 206 constitute an EGF-like 3; calcium-binding domain; it reads DIDECRYGYCQQLCANVPGSYSCTCNPGFTLNDDGRSCQ. Residues 207-246 form the EGF-like 4; calcium-binding domain; sequence DVNECETENPCVQTCVNTYGSFICRCDPGYELEEDGIHCS. The segment at 245–448 is interaction with LOXL1; it reads CSDMDECSFS…LRIYVSQYPF (204 aa). In terms of domain architecture, EGF-like 5; calcium-binding spans 247 to 287; it reads DMDECSFSEFLCQHECVNQPGSYFCSCPPGYVLLDDNRSCQ. 2 N-linked (GlcNAc...) asparagine glycosylation sites follow: asparagine 283 and asparagine 296. Residues 288–333 form the EGF-like 6; calcium-binding domain; the sequence is DINECEHRNHTCTSLQTCYNLQGGFKCIDPISCEEPYLLIGENRCM.

It belongs to the fibulin family. Homodimer. Monomer, homodimerizes in presence of Ca(2+). Interacts with ELN. Interacts (via N-terminus) with the integrins ITGAV/ITGB3, ITGAV/ITGB5 and ITGA9/ITGB1. Interacts with FBN1 (via N-terminal domain). Forms a ternary complex with ELN and FBN1. Interacts with EFEMP2 with moderate affinity. Interacts with LOXL1. In terms of processing, N-glycosylated.

Its subcellular location is the secreted. It localises to the extracellular space. It is found in the extracellular matrix. Essential for elastic fiber formation, is involved in the assembly of continuous elastin (ELN) polymer and promotes the interaction of microfibrils and ELN. Stabilizes and organizes elastic fibers in the skin, lung and vasculature. Promotes adhesion of endothelial cells through interaction of integrins and the RGD motif. Vascular ligand for integrin receptors which may play a role in vascular development and remodeling. May act as an adapter that mediates the interaction between FBN1 and ELN. This chain is Fibulin-5 (Fbln5), found in Mus musculus (Mouse).